We begin with the raw amino-acid sequence, 355 residues long: Protein RecA (355 aa).

67 to 74 provides a ligand contact to ATP; it reads GPESSGKT.

Belongs to the RecA family.

It is found in the cytoplasm. Functionally, can catalyze the hydrolysis of ATP in the presence of single-stranded DNA, the ATP-dependent uptake of single-stranded DNA by duplex DNA, and the ATP-dependent hybridization of homologous single-stranded DNAs. It interacts with LexA causing its activation and leading to its autocatalytic cleavage. In Shewanella halifaxensis (strain HAW-EB4), this protein is Protein RecA.